The primary structure comprises 316 residues: Glutathione synthetase (316 aa).

The region spanning 124 to 311 (NEKLAALLFP…IAGLLFDAIE (188 aa)) is the ATP-grasp domain. Position 151-208 (151-208 (FVLEHGQAVLKPLDGMGGRSIFRSGSGDPNLNVILETLTDGNRKLTLAQRFIPDITAG)) interacts with ATP. Residues glutamate 282 and asparagine 284 each contribute to the Mg(2+) site.

Belongs to the prokaryotic GSH synthase family. Requires Mg(2+) as cofactor. Mn(2+) is required as a cofactor.

It carries out the reaction gamma-L-glutamyl-L-cysteine + glycine + ATP = glutathione + ADP + phosphate + H(+). Its pathway is sulfur metabolism; glutathione biosynthesis; glutathione from L-cysteine and L-glutamate: step 2/2. The sequence is that of Glutathione synthetase from Xanthomonas axonopodis pv. citri (strain 306).